The primary structure comprises 441 residues: Membrane protein PB1A10.07c (441 aa).

11 consecutive transmembrane segments (helical) span residues Met-1–Ile-21, Val-41–Met-61, Leu-97–Thr-117, Gly-128–Pro-148, Ile-158–Phe-178, Thr-206–Ala-226, Ile-235–Ile-255, Gly-263–Ala-283, Val-307–Ser-327, Tyr-364–Leu-384, and Ile-415–Phe-435.

It belongs to the TDE1 family.

The protein resides in the membrane. The protein is Membrane protein PB1A10.07c of Schizosaccharomyces pombe (strain 972 / ATCC 24843) (Fission yeast).